A 229-amino-acid chain; its full sequence is Large ribosomal subunit protein uL1 (229 aa).

As to quaternary structure, part of the 50S ribosomal subunit.

Functionally, binds directly to 23S rRNA. The L1 stalk is quite mobile in the ribosome, and is involved in E site tRNA release. Protein L1 is also a translational repressor protein, it controls the translation of the L11 operon by binding to its mRNA. The polypeptide is Large ribosomal subunit protein uL1 (Rhodopseudomonas palustris (strain ATCC BAA-98 / CGA009)).